The chain runs to 219 residues: uncharacterized protein (219 aa).

Residues 28–50 (IVSSLIAGGYALFVSAFTSYVYT) traverse the membrane as a helical segment. Residues 155 to 218 (EILRESLSEI…EEIEKELEFF (64 aa)) are a coiled coil.

Its subcellular location is the membrane. This is an uncharacterized protein from Aquifex aeolicus (strain VF5).